Here is a 576-residue protein sequence, read N- to C-terminus: Plant intracellular Ras-group-related LRR protein 4 (576 aa).

Positions 130 to 151 are enriched in low complexity; it reads AAPAAATTTTSTAAAGSSSSSA. A disordered region spans residues 130–181; the sequence is AAPAAATTTTSTAAAGSSSSSAVGNAERHASSGTNGFTASRVAGTSTSTGRV. Positions 160–180 are enriched in polar residues; it reads SSGTNGFTASRVAGTSTSTGR. LRR repeat units lie at residues 272–295, 296–318, 320–341, 342–364, 366–387, 389–410, 411–433, 434–456, 458–481, 482–503, and 505–527; these read LTGL…IGKL, FSLA…IGDL, SLIY…IGRL, LNLE…IGSL, RLKK…IGHC, SLVE…VGKL, EPLE…MASL, TKLK…FCFA, SLIK…IGNL, EMLE…SFGN, and KHLR…IALK. The GVYW; degenerate signature appears at 528–535; sequence GAQAVVQY.

The protein belongs to the SHOC2 family. In terms of tissue distribution, widely expressed.

Functionally, leucine-rich repeat protein that likely mediates protein interactions, possibly in the context of signal transduction. This is Plant intracellular Ras-group-related LRR protein 4 (IRL4) from Oryza sativa subsp. japonica (Rice).